The primary structure comprises 201 residues: UPF0177 protein YajF (201 aa).

Transmembrane regions (helical) follow at residues 10 to 30, 44 to 64, 82 to 102, 119 to 139, and 159 to 179; these read TVIL…YVEY, ITVN…MLGI, ILIL…SQFI, VMGS…APIL, and FVFS…VFLI.

The protein belongs to the UPF0177 family.

It is found in the cell membrane. The sequence is that of UPF0177 protein YajF (yajF) from Lactococcus lactis subsp. lactis (strain IL1403) (Streptococcus lactis).